The following is a 361-amino-acid chain: tRNA-specific 2-thiouridylase MnmA (361 aa).

ATP contacts are provided by residues 6 to 13 (LVSGGVDS) and isoleucine 32. Positions 93–95 (NPD) are interaction with target base in tRNA. Cysteine 98 acts as the Nucleophile in catalysis. An intrachain disulfide couples cysteine 98 to cysteine 193. Glycine 121 provides a ligand contact to ATP. The interval 143–145 (KDQ) is interaction with tRNA. Cysteine 193 serves as the catalytic Cysteine persulfide intermediate.

The protein belongs to the MnmA/TRMU family.

It localises to the cytoplasm. The enzyme catalyses S-sulfanyl-L-cysteinyl-[protein] + uridine(34) in tRNA + AH2 + ATP = 2-thiouridine(34) in tRNA + L-cysteinyl-[protein] + A + AMP + diphosphate + H(+). Its function is as follows. Catalyzes the 2-thiolation of uridine at the wobble position (U34) of tRNA, leading to the formation of s(2)U34. This chain is tRNA-specific 2-thiouridylase MnmA, found in Porphyromonas gingivalis (strain ATCC BAA-308 / W83).